The sequence spans 102 residues: Large ribosomal subunit protein bL21 (102 aa).

This sequence belongs to the bacterial ribosomal protein bL21 family. Part of the 50S ribosomal subunit. Contacts protein L20.

Its function is as follows. This protein binds to 23S rRNA in the presence of protein L20. This is Large ribosomal subunit protein bL21 from Campylobacter hominis (strain ATCC BAA-381 / DSM 21671 / CCUG 45161 / LMG 19568 / NCTC 13146 / CH001A).